Consider the following 123-residue polypeptide: WAP four-disulfide core domain protein 5 (123 aa).

A signal peptide spans 1–24 (MRIQSLLLLGALLAVGSQLPAVFG). WAP domains are found at residues 27 to 73 (KGEK…CVPR) and 74 to 121 (VSVK…RDPA). Disulfide bonds link cysteine 34–cysteine 62, cysteine 41–cysteine 66, cysteine 49–cysteine 61, cysteine 55–cysteine 70, cysteine 81–cysteine 109, cysteine 88–cysteine 113, cysteine 96–cysteine 108, and cysteine 102–cysteine 117.

It localises to the secreted. Functionally, putative acid-stable proteinase inhibitor. The protein is WAP four-disulfide core domain protein 5 (WFDC5) of Pongo abelii (Sumatran orangutan).